The primary structure comprises 626 residues: LGDVPGTSGAIFVARPESNYPDRFGLFGAPPLEEGYVILVGDGRLKRFPPPSEFLLSVWSRSRAARPVCCSIVLCCFCLTVFLYLSENMGQTATTPLSLTLDHWKDVERTAHNQSVEVRKRRWVTFCSAEWPTFNVGWPRDGTFNPDIITQVKIKVFSPGPHGHPDQVPYIVTWEALAVDPPPWVKPFVHPKPPLLLPPSAPSLPPEPPLSTPPQSSLYPALTSPLNTKPRPQVLPDSGGPLIDLLTEDPPPYRDPGPPSPDGKGDSGEVAPTEGAPDSSPMVSRLRGRREPPVADSTTSQAFPLRLGGNGQFQYWPFSSSDLYNWKNNNPSFSEDPGKLTALIESVLLTHQPTWDDCQQLLGTLLTGEEKQRVLLEARKAVRGEDGRPTQLPNDINDAFPLERPDWDYNTQRGRNHLVHYRQLLLAGLQNAGRSPTNLAKVKGITQGPNESPSAFLERLKEAYRRYTPYDPEDPGQETNVSMSFIWQSAPDIGRKLERLEDLKNKTLGDLVREAEKIFNKRETPEEREERVRRETEEKEERRRAEDERREKERDRRRHREMSKLLATVVSGQRQDRQGGERRRPQLDHDQCAYCKEKGHWARDCPKKPRGPRGPRPQASLLTLDD.

Residues 1 to 67 (LGDVPGTSGA…VWSRSRAARP (67 aa)) lie on the Cytoplasmic side of the membrane. A helical membrane pass occupies residues 68–86 (VCCSIVLCCFCLTVFLYLS). The Extracellular segment spans residues 87-626 (ENMGQTATTP…PQASLLTLDD (540 aa)). The N-linked (GlcNAc...) asparagine; by host glycan is linked to asparagine 113. Composition is skewed to pro residues over residues 199 to 212 (PSAPSLPPEPPLST) and 249 to 261 (DPPPYRDPGPPSP). The segment at 199-306 (PSAPSLPPEP…STTSQAFPLR (108 aa)) is disordered. A glycan (N-linked (GlcNAc...) asparagine; by host) is linked at asparagine 480. Basic and acidic residues-rich tracts occupy residues 522–554 (RETPEEREERVRRETEEKEERRRAEDERREKER) and 574–607 (RQDRQGGERRRPQLDHDQCAYCKEKGHWARDCPK). Residues 522–626 (RETPEEREER…PQASLLTLDD (105 aa)) are disordered. Residues 590–607 (DQCAYCKEKGHWARDCPK) form a CCHC-type zinc finger.

In terms of processing, glycosylated by host. Post-translationally, cleaved by host near the middle of the molecule, releasing the c-terminal half containing capsid and nucleoprotein domains op GAG.

It is found in the host cell membrane. In terms of biological role, plays a role in viral particle release. Presumably acts by facilitating the fission of the virion bud at the cell surface. May prevent the antiviral activity of murine APOBEC3. The polypeptide is Glyco-Gag protein (Mus musculus (Mouse)).